Here is a 356-residue protein sequence, read N- to C-terminus: Alanine racemase (356 aa).

The active-site Proton acceptor; specific for D-alanine is Lys-35. Residue Lys-35 is modified to N6-(pyridoxal phosphate)lysine. Arg-130 serves as a coordination point for substrate. Tyr-253 functions as the Proton acceptor; specific for L-alanine in the catalytic mechanism. Substrate is bound at residue Met-301.

It belongs to the alanine racemase family. It depends on pyridoxal 5'-phosphate as a cofactor.

It carries out the reaction L-alanine = D-alanine. Its pathway is amino-acid biosynthesis; D-alanine biosynthesis; D-alanine from L-alanine: step 1/1. In terms of biological role, catalyzes the interconversion of L-alanine and D-alanine. May also act on other amino acids. This chain is Alanine racemase (alr), found in Sodalis glossinidius (strain morsitans).